A 241-amino-acid polypeptide reads, in one-letter code: DNA repair protein RecO (241 aa).

The protein belongs to the RecO family.

Functionally, involved in DNA repair and RecF pathway recombination. This is DNA repair protein RecO from Orientia tsutsugamushi (strain Ikeda) (Rickettsia tsutsugamushi).